The sequence spans 306 residues: 4-hydroxy-tetrahydrodipicolinate synthase (306 aa).

T46 contributes to the pyruvate binding site. The active-site Proton donor/acceptor is Y134. The active-site Schiff-base intermediate with substrate is the K162. V204 lines the pyruvate pocket.

It belongs to the DapA family. Homotetramer; dimer of dimers.

The protein resides in the cytoplasm. The catalysed reaction is L-aspartate 4-semialdehyde + pyruvate = (2S,4S)-4-hydroxy-2,3,4,5-tetrahydrodipicolinate + H2O + H(+). It functions in the pathway amino-acid biosynthesis; L-lysine biosynthesis via DAP pathway; (S)-tetrahydrodipicolinate from L-aspartate: step 3/4. In terms of biological role, catalyzes the condensation of (S)-aspartate-beta-semialdehyde [(S)-ASA] and pyruvate to 4-hydroxy-tetrahydrodipicolinate (HTPA). In Synechococcus sp. (strain JA-2-3B'a(2-13)) (Cyanobacteria bacterium Yellowstone B-Prime), this protein is 4-hydroxy-tetrahydrodipicolinate synthase.